The chain runs to 293 residues: Lysosomal amino acid transporter 1 homolog (293 aa).

The Lumenal segment spans residues 1–37 (MVWRTLVASNFSTCPNGSIQWIWDVFGECAQDGWDEA). Asn10 carries an N-linked (GlcNAc...) asparagine glycan. The region spanning 34–100 (WDEASVALGL…LADQLPLQTY (67 aa)) is the PQ-loop 1 domain. The helical transmembrane segment at 38 to 58 (SVALGLVSIFCFAASTFPQYI) threads the bilayer. The Cytoplasmic portion of the chain corresponds to 59-71 (KACKTGNMDQALS). Residues 72-92 (LWFLLGWIGGDSCNLIGSFLA) form a helical membrane-spanning segment. Residues 93-96 (DQLP) are Lumenal-facing. The chain crosses the membrane as a helical span at residues 97–117 (LQTYTAVYYVLADLLMLTLYF). Residues 118–126 (HYKFKKQPS) are Cytoplasmic-facing. Residues 127-147 (LLSAPINSVLLFILGTVCITP) form a helical membrane-spanning segment. Residues 148 to 182 (LLSSTDPVAVPREGFRGRTLLSVEPGNKPFTKKEV) are Lumenal-facing. The helical transmembrane segment at 183-203 (VGFVIGSASSVLYLLSRLPQI) threads the bilayer. In terms of domain architecture, PQ-loop 2 spans 191-243 (SSVLYLLSRLPQIRTNFVRQSTQGISYSLFALVMLGNTLYGLSVLLKNPEVGQ). The Cytoplasmic segment spans residues 204 to 214 (RTNFVRQSTQG). Residues 215–235 (ISYSLFALVMLGNTLYGLSVL) traverse the membrane as a helical segment. At 236–254 (LKNPEVGQSEGSYLLHHLP) the chain is on the lumenal side. The chain crosses the membrane as a helical span at residues 255–275 (WLVGSLGVLLLDTIISIQFLV). Over 276–293 (YRSHDADAASEREPLLPS) the chain is Cytoplasmic. The short motif at 290–291 (LL) is the Di-leucine motif element.

Belongs to the laat-1 family.

The protein resides in the lysosome membrane. Amino acid transporter that specifically mediates the pH-dependent export of the cationic amino acids arginine, histidine and lysine from lysosomes. In Rattus norvegicus (Rat), this protein is Lysosomal amino acid transporter 1 homolog (Slc66a1).